Here is a 126-residue protein sequence, read N- to C-terminus: Small ribosomal subunit protein uS8 (126 aa).

This sequence belongs to the universal ribosomal protein uS8 family. As to quaternary structure, part of the 30S ribosomal subunit. Contacts proteins S5 and S12.

In terms of biological role, one of the primary rRNA binding proteins, it binds directly to 16S rRNA central domain where it helps coordinate assembly of the platform of the 30S subunit. In Nitratidesulfovibrio vulgaris (strain DSM 19637 / Miyazaki F) (Desulfovibrio vulgaris), this protein is Small ribosomal subunit protein uS8.